The following is a 203-amino-acid chain: GTP-binding protein YPTM2 (203 aa).

GTP is bound by residues 15-23, 33-40, 63-67, 121-124, and 151-153; these read GDSGVGKSC, YLDSYIST, DTAGQ, NKSD, and SAK. The Effector region signature appears at 37–45; that stretch reads YISTIGVDF. 2 S-geranylgeranyl cysteine lipidation sites follow: cysteine 200 and cysteine 201.

This sequence belongs to the small GTPase superfamily. Rab family. Its expression is weak in stems, higher in roots, leaves and coleoptiles, but highest in flowers.

It is found in the cell membrane. Its function is as follows. Protein transport. Probably involved in vesicular traffic. This Zea mays (Maize) protein is GTP-binding protein YPTM2 (YPTM2).